The chain runs to 302 residues: MDKAKLKEELTKRISSPVLENEPLAQHTTWKIGGPADFLIEPQSIEELSLVIRFLTENAVNFRVIGNGSNILVLDRGFRGVIIKTKKINKVEITAGGQVFAEAGVLLPALAARALKVGLSGLEELCAIPGSVGGAIRQNAGAHGKEIKDVLKRVWTINERGELKEFFANECGFKYRSSRFKEEKQWIVKAEFSLNPGDKKEILKKIREFREKRLASQPLEFPNAGSVFKNPEGIPAWKLIKEAGAQGLKKGGAMVSEKHANFIINTGGASAADVIYLINKIQELVWKKFSVKLLLEVEVLGE.

One can recognise an FAD-binding PCMH-type domain in the interval Lys-31–Arg-213. Arg-176 is a catalytic residue. Ser-226 (proton donor) is an active-site residue. Residue Glu-296 is part of the active site.

This sequence belongs to the MurB family. The cofactor is FAD.

The protein resides in the cytoplasm. The enzyme catalyses UDP-N-acetyl-alpha-D-muramate + NADP(+) = UDP-N-acetyl-3-O-(1-carboxyvinyl)-alpha-D-glucosamine + NADPH + H(+). It participates in cell wall biogenesis; peptidoglycan biosynthesis. Functionally, cell wall formation. The protein is UDP-N-acetylenolpyruvoylglucosamine reductase of Carboxydothermus hydrogenoformans (strain ATCC BAA-161 / DSM 6008 / Z-2901).